We begin with the raw amino-acid sequence, 319 residues long: Glycine--tRNA ligase alpha subunit (319 aa).

Belongs to the class-II aminoacyl-tRNA synthetase family. As to quaternary structure, tetramer of two alpha and two beta subunits.

The protein localises to the cytoplasm. It catalyses the reaction tRNA(Gly) + glycine + ATP = glycyl-tRNA(Gly) + AMP + diphosphate. The sequence is that of Glycine--tRNA ligase alpha subunit from Coxiella burnetii (strain CbuK_Q154) (Coxiella burnetii (strain Q154)).